Consider the following 658-residue polypeptide: Threonine--tRNA ligase (658 aa).

A TGS domain is found at Met1–Thr64. Residues Asp246 to Pro548 form a catalytic region. Zn(2+)-binding residues include Cys343, His394, and His525.

This sequence belongs to the class-II aminoacyl-tRNA synthetase family. Homodimer. The cofactor is Zn(2+).

It is found in the cytoplasm. The catalysed reaction is tRNA(Thr) + L-threonine + ATP = L-threonyl-tRNA(Thr) + AMP + diphosphate + H(+). Functionally, catalyzes the attachment of threonine to tRNA(Thr) in a two-step reaction: L-threonine is first activated by ATP to form Thr-AMP and then transferred to the acceptor end of tRNA(Thr). Also edits incorrectly charged L-seryl-tRNA(Thr). The sequence is that of Threonine--tRNA ligase from Brucella melitensis biotype 2 (strain ATCC 23457).